Reading from the N-terminus, the 432-residue chain is Casein kinase II subunit alpha-4, chloroplastic (432 aa).

A chloroplast-targeting transit peptide spans 1 to 55 (MALRPCTGFTISSLRNASAANNNLFSLLSFSSSSPAKRNLLLSSLQDNLRRFASS). Residues 63-83 (LRNQQQQHQQQQQSRVKEKSE) are disordered. Low complexity predominate over residues 66–75 (QQQQHQQQQQ). Residues 132–417 (YEVVRKVGRG…AKEAMAHPYF (286 aa)) enclose the Protein kinase domain. ATP-binding positions include 138–146 (VGRGKYSEV) and K161. The Proton acceptor role is filled by D249.

It belongs to the protein kinase superfamily. Ser/Thr protein kinase family. CK2 subfamily. In terms of assembly, tetramer of two alpha and two beta chains. As to expression, expressed in root tips, lateral root primordia, cotyledons, leaf primordia, sepals, filaments, stigma, and anthers.

It localises to the plastid. The protein resides in the chloroplast. It carries out the reaction L-seryl-[protein] + ATP = O-phospho-L-seryl-[protein] + ADP + H(+). The enzyme catalyses L-threonyl-[protein] + ATP = O-phospho-L-threonyl-[protein] + ADP + H(+). Functionally, casein kinases are operationally defined by their preferential utilization of acidic proteins such as caseins as substrates. The alpha chain contains the catalytic site. Involved in the regulation of various developmental processes. Involved in the regulation of plant growth and flowering time. Involved in retrograde signaling in plant responses to abscisic acid (ABA) and heat stress. May act as an enhancing factor in abiotic stress signaling through modulation of the expression of some molecular players in retrograde signaling. Phosphorylates RuBisCo activase (RCA) at Thr-78. This Arabidopsis thaliana (Mouse-ear cress) protein is Casein kinase II subunit alpha-4, chloroplastic.